The chain runs to 547 residues: Chaperonin GroEL (547 aa).

Residues 30-33 (TLGP), Lys51, 87-91 (DGTTT), Gly415, 479-481 (DAA), and Asp495 contribute to the ATP site.

The protein belongs to the chaperonin (HSP60) family. In terms of assembly, forms a cylinder of 14 subunits composed of two heptameric rings stacked back-to-back. Interacts with the co-chaperonin GroES.

It localises to the cytoplasm. It catalyses the reaction ATP + H2O + a folded polypeptide = ADP + phosphate + an unfolded polypeptide.. Its function is as follows. Together with its co-chaperonin GroES, plays an essential role in assisting protein folding. The GroEL-GroES system forms a nano-cage that allows encapsulation of the non-native substrate proteins and provides a physical environment optimized to promote and accelerate protein folding. The polypeptide is Chaperonin GroEL (Dichelobacter nodosus (strain VCS1703A)).